The chain runs to 529 residues: uncharacterized protein (529 aa).

A helical transmembrane segment spans residues 354–373 (FHVASFPWISWAILGSYIML).

It localises to the host membrane. This is an uncharacterized protein from Acidianus convivator (ATV).